Consider the following 202-residue polypeptide: Large ribosomal subunit protein eL13 (202 aa).

It belongs to the eukaryotic ribosomal protein eL13 family.

This Nicotiana tabacum (Common tobacco) protein is Large ribosomal subunit protein eL13 (RPL13).